Here is a 481-residue protein sequence, read N- to C-terminus: Glutamate--tRNA ligase (481 aa).

The 'HIGH' region motif lies at 9–19 (PSPTGNLHIGT). A 'KMSKS' region motif is present at residues 247 to 251 (KLSKR). Position 250 (K250) interacts with ATP.

This sequence belongs to the class-I aminoacyl-tRNA synthetase family. Glutamate--tRNA ligase type 1 subfamily. In terms of assembly, monomer.

It localises to the cytoplasm. It catalyses the reaction tRNA(Glu) + L-glutamate + ATP = L-glutamyl-tRNA(Glu) + AMP + diphosphate. Catalyzes the attachment of glutamate to tRNA(Glu) in a two-step reaction: glutamate is first activated by ATP to form Glu-AMP and then transferred to the acceptor end of tRNA(Glu). This chain is Glutamate--tRNA ligase, found in Trichormus variabilis (strain ATCC 29413 / PCC 7937) (Anabaena variabilis).